Here is a 320-residue protein sequence, read N- to C-terminus: Elongation factor Ts (320 aa).

Positions 82-85 (TDFV) are involved in Mg(2+) ion dislocation from EF-Tu.

Belongs to the EF-Ts family.

Its subcellular location is the cytoplasm. In terms of biological role, associates with the EF-Tu.GDP complex and induces the exchange of GDP to GTP. It remains bound to the aminoacyl-tRNA.EF-Tu.GTP complex up to the GTP hydrolysis stage on the ribosome. In Flavobacterium johnsoniae (strain ATCC 17061 / DSM 2064 / JCM 8514 / BCRC 14874 / CCUG 350202 / NBRC 14942 / NCIMB 11054 / UW101) (Cytophaga johnsonae), this protein is Elongation factor Ts.